A 128-amino-acid chain; its full sequence is Holo-[acyl-carrier-protein] synthase (128 aa).

The Mg(2+) site is built by Asp-8 and Glu-59.

It belongs to the P-Pant transferase superfamily. AcpS family. Mg(2+) is required as a cofactor.

It is found in the cytoplasm. The catalysed reaction is apo-[ACP] + CoA = holo-[ACP] + adenosine 3',5'-bisphosphate + H(+). In terms of biological role, transfers the 4'-phosphopantetheine moiety from coenzyme A to a Ser of acyl-carrier-protein. The chain is Holo-[acyl-carrier-protein] synthase from Rickettsia typhi (strain ATCC VR-144 / Wilmington).